Consider the following 433-residue polypeptide: Xylose isomerase (433 aa).

Catalysis depends on residues histidine 99 and aspartate 102. 7 residues coordinate Mg(2+): glutamate 230, glutamate 266, histidine 269, aspartate 294, aspartate 305, aspartate 307, and aspartate 337.

This sequence belongs to the xylose isomerase family. As to quaternary structure, homotetramer. Mg(2+) is required as a cofactor.

The protein resides in the cytoplasm. The enzyme catalyses alpha-D-xylose = alpha-D-xylulofuranose. The chain is Xylose isomerase from Cereibacter sphaeroides (strain ATCC 17029 / ATH 2.4.9) (Rhodobacter sphaeroides).